We begin with the raw amino-acid sequence, 389 residues long: cAMP-dependent protein kinase regulatory subunit (389 aa).

Disordered regions lie at residues 1 to 57 and 87 to 110; these read MSEN…KFAG and SVSAESLNPNPTASSNESWTPPYH. A dimerization and phosphorylation region spans residues 1–128; the sequence is MSENTFPGRL…RLKKSISGNF (128 aa). The span at 21 to 31 shows a compositional bias: polar residues; that stretch reads AANTEKPSTSH. Residues 34–43 are compositionally biased toward basic and acidic residues; that stretch reads RVTERDEDKV. Serine 87 is subject to Phosphoserine. Positions 87–105 are enriched in polar residues; the sequence is SVSAESLNPNPTASSNESW. 3',5'-cyclic AMP contacts are provided by residues 129–258, glutamate 207, arginine 216, 261–377, glutamate 327, and arginine 336; these read LFNH…FLEE and LLST…GVEE.

The protein belongs to the cAMP-dependent kinase regulatory chain family. In terms of assembly, tetramer, composed of 2 regulatory (R) and 2 catalytic (C) subunits. In the presence of cAMP it dissociates into 2 active monomeric C subunits and an R dimer.

The chain is cAMP-dependent protein kinase regulatory subunit (pkar) from Blumeria graminis (Powdery mildew).